The following is a 134-amino-acid chain: Large ribosomal subunit protein uL22 (134 aa).

Belongs to the universal ribosomal protein uL22 family. As to quaternary structure, part of the 50S ribosomal subunit.

Its function is as follows. This protein binds specifically to 23S rRNA; its binding is stimulated by other ribosomal proteins, e.g. L4, L17, and L20. It is important during the early stages of 50S assembly. It makes multiple contacts with different domains of the 23S rRNA in the assembled 50S subunit and ribosome. Functionally, the globular domain of the protein is located near the polypeptide exit tunnel on the outside of the subunit, while an extended beta-hairpin is found that lines the wall of the exit tunnel in the center of the 70S ribosome. The protein is Large ribosomal subunit protein uL22 of Porphyromonas gingivalis (strain ATCC 33277 / DSM 20709 / CIP 103683 / JCM 12257 / NCTC 11834 / 2561).